Here is a 464-residue protein sequence, read N- to C-terminus: V-type ATP synthase beta chain (464 aa).

The protein belongs to the ATPase alpha/beta chains family.

Functionally, produces ATP from ADP in the presence of a proton gradient across the membrane. The V-type beta chain is a regulatory subunit. This Streptococcus gordonii (strain Challis / ATCC 35105 / BCRC 15272 / CH1 / DL1 / V288) protein is V-type ATP synthase beta chain.